The following is a 723-amino-acid chain: Polyribonucleotide nucleotidyltransferase (723 aa).

D488 and D494 together coordinate Mg(2+). A KH domain is found at 555–614 (PKIITLNIKPEKIKDVIGPGGKQINAIIEETGVKIDIEQDGTVYIASQDQAMNRKAIAII). Residues 624–692 (GEVYTGKVRR…HQGRVNLSRK (69 aa)) form the S1 motif domain. Residues 692-723 (KALLEKKEQPEGDKKPQAEKKFYPKTKKPESK) are disordered. The segment covering 693–723 (ALLEKKEQPEGDKKPQAEKKFYPKTKKPESK) has biased composition (basic and acidic residues).

Belongs to the polyribonucleotide nucleotidyltransferase family. Mg(2+) serves as cofactor.

It localises to the cytoplasm. The catalysed reaction is RNA(n+1) + phosphate = RNA(n) + a ribonucleoside 5'-diphosphate. In terms of biological role, involved in mRNA degradation. Catalyzes the phosphorolysis of single-stranded polyribonucleotides processively in the 3'- to 5'-direction. This is Polyribonucleotide nucleotidyltransferase from Listeria welshimeri serovar 6b (strain ATCC 35897 / DSM 20650 / CCUG 15529 / CIP 8149 / NCTC 11857 / SLCC 5334 / V8).